Consider the following 389-residue polypeptide: Teichoic acid glycerol-phosphate transferase (389 aa).

It belongs to the CDP-glycerol glycerophosphotransferase family.

It localises to the cell membrane. It carries out the reaction 4-O-[(2R)-glycerylphospho]-N-acetyl-beta-D-mannosaminyl-(1-&gt;4)-N-acetyl-alpha-D-glucosaminyl di-trans,octa-cis-undecaprenyl diphosphate + CDP-glycerol = 4-O-[di(2R)-glycerylphospho]-N-acetyl-beta-D-mannosaminyl-(1-&gt;4)-N-acetyl-alpha-D-glucosaminyl di-trans,octa-cis-undecaprenyl diphosphate + CMP + H(+). Its pathway is cell wall biogenesis; poly(ribitol phosphate) teichoic acid biosynthesis. In terms of biological role, catalyzes the addition of a second glycerol phosphate unit from CDP-glycerol to the prenolpyrophosphate-linked disaccharide, to complete the linkage unit. In Staphylococcus aureus (strain NCTC 8325 / PS 47), this protein is Teichoic acid glycerol-phosphate transferase (tarF).